The chain runs to 382 residues: V-type proton ATPase subunit C 1 (382 aa).

Threonine 2 bears the N-acetylthreonine mark.

Belongs to the V-ATPase C subunit family. V-ATPase is a heteromultimeric enzyme made up of two complexes: the ATP-hydrolytic V1 complex and the proton translocation V0 complex. The V1 complex consists of three catalytic AB heterodimers that form a heterohexamer, three peripheral stalks each consisting of EG heterodimers, one central rotor including subunits D and F, and the regulatory subunits C and H. The proton translocation complex V0 consists of the proton transport subunit a, a ring of proteolipid subunits c9c'', rotary subunit d, subunits e and f, and the accessory subunits ATP6AP1/Ac45 and ATP6AP2/PRR. As to expression, expressed in brain (at protein level).

It is found in the cytoplasmic vesicle. It localises to the secretory vesicle. The protein resides in the synaptic vesicle membrane. Its subcellular location is the clathrin-coated vesicle membrane. Functionally, subunit of the V1 complex of vacuolar(H+)-ATPase (V-ATPase), a multisubunit enzyme composed of a peripheral complex (V1) that hydrolyzes ATP and a membrane integral complex (V0) that translocates protons. V-ATPase is responsible for acidifying and maintaining the pH of intracellular compartments and in some cell types, is targeted to the plasma membrane, where it is responsible for acidifying the extracellular environment. Subunit C is necessary for the assembly of the catalytic sector of the enzyme and is likely to have a specific function in its catalytic activity. This Rattus norvegicus (Rat) protein is V-type proton ATPase subunit C 1 (Atp6v1c1).